The following is a 2726-amino-acid chain: Filamin-C (2726 aa).

Positions 1–260 are actin-binding; the sequence is MMNNSNYSDA…VMTYLSQFPK (260 aa). A Phosphoserine modification is found at S5. Calponin-homology (CH) domains are found at residues 37–143 and 160–263; these read KIQQ…LHYS and QTPK…KAKL. 15 Filamin repeats span residues 271 to 369, 371 to 469, 470 to 566, 567 to 659, 663 to 759, 760 to 862, 863 to 961, 962 to 1057, 1058 to 1150, 1151 to 1245, 1246 to 1345, 1346 to 1438, 1439 to 1534, 1535 to 1631, and 1636 to 1735; these read SKQL…EVNV, MALG…PVHV, AEAC…EVQV, SPEA…IAHI, PPDC…RVNV, GEGS…HIKV, DPSH…VVNV, APPL…AVEG, VLPP…KATI, QPVF…RVHV, QPAV…RVGV, TEGC…RVPV, KDVV…KIKV, LPAH…RIHA, and DASK…HVLA. The residue at position 1003 (R1003) is an Omega-N-methylarginine. S1162 and S1339 each carry phosphoserine. The tract at residues 1736 to 1759 is hinge 1; it reads CDPLPHVEEPAEVLQLHQPYAPLR. Filamin repeat units lie at residues 1760 to 1854, 1855 to 1947, 1948 to 2034, and 2037 to 2129; these read PGTC…LQFY, VDAI…TAKI, TGDD…KILV, and SEIG…TVKV. At S2043 the chain carries Phosphoserine. The intradomain insert; mediate targeting to Z lines stretch occupies residues 2163–2244; it reads GNWFQMVSAQ…FGSITRQQEG (82 aa). Positions 2194–2210 are enriched in basic and acidic residues; the sequence is ISKTRGGETKREVRVEE. Residues 2194–2214 are disordered; the sequence is ISKTRGGETKREVRVEESTQV. Phosphoserine is present on residues S2234 and S2237. The residue at position 2239 (T2239) is a Phosphothreonine. The span at 2241–2260 shows a compositional bias: polar residues; that stretch reads QQEGEASSQDMTAQVTSPSG. A disordered region spans residues 2241 to 2261; it reads QQEGEASSQDMTAQVTSPSGK. The Filamin 20; mediates interaction with XIRP1 repeat unit spans residues 2245–2307; it reads EASSQDMTAQ…VPGSPFQFTV (63 aa). Filamin repeat units follow at residues 2310-2402, 2404-2497, and 2501-2593; these read LGEG…VVPV, SLSD…KIRV, and SQAG…KAKV. Residues 2404–2725 form an interaction with INPPL1 region; it reads SLSDDARRLT…VPGSPFKVNV (322 aa). Phosphoserine occurs at positions 2587, 2618, 2621, 2633, 2715, and 2719. Residues 2594–2630 form a hinge 2 region; the sequence is TGPRLSGGHSLHETSTVLVETVTKSSSSRGASYSSIP. Residues 2594-2726 form a self-association site, tail region; the sequence is TGPRLSGGHS…PGSPFKVNVP (133 aa). A Filamin 24 repeat occupies 2631–2725; that stretch reads KFSSDASKVV…VPGSPFKVNV (95 aa).

It belongs to the filamin family. In terms of assembly, homodimer; the filamin repeat 24 and the second hinge domain are important for dimer formation. Interacts with FLNB, KCND2, INPPL1, ITGB1A, MYOT, MYOZ1 and MYOZ3. Interacts with sarcoglycans SGCD and SGCG. Interacts (via filament repeats 17-18, 20-21 and 24) with USP25 (isoform USP25m only). Interacts with FBLIM1. Interacts with KY. Interacts with IGFN1. Interacts with MICALL2. Interacts with XIRP1; this interaction is mediated by filamin 20 repeat. Interacts with ANK3. Interacts with SYNPO2. Post-translationally, ubiquitinated by FBXL22, leading to proteasomal degradation.

The protein resides in the cytoplasm. Its subcellular location is the membrane. The protein localises to the cytoskeleton. It localises to the myofibril. It is found in the sarcomere. The protein resides in the z line. In terms of biological role, muscle-specific filamin, which plays a central role in sarcomere assembly and organization. Critical for normal myogenesis, it probably functions as a large actin-cross-linking protein with structural functions at the Z lines in muscle cells. May be involved in reorganizing the actin cytoskeleton in response to signaling events. The protein is Filamin-C (Flnc) of Rattus norvegicus (Rat).